Consider the following 405-residue polypeptide: Tyrosine--tRNA ligase (405 aa).

Tyr-35 serves as a coordination point for L-tyrosine. The 'HIGH' region signature appears at 40–49 (ATSSSLHIGH). Tyr-166 and Gln-170 together coordinate L-tyrosine. A 'KMSKS' region motif is present at residues 226 to 230 (KMGKS). Lys-229 lines the ATP pocket. One can recognise an S4 RNA-binding domain in the interval 340–405 (ILLVDLMLDS…GKKKFLRIVI (66 aa)).

This sequence belongs to the class-I aminoacyl-tRNA synthetase family. TyrS type 1 subfamily. Homodimer.

It is found in the cytoplasm. The catalysed reaction is tRNA(Tyr) + L-tyrosine + ATP = L-tyrosyl-tRNA(Tyr) + AMP + diphosphate + H(+). Catalyzes the attachment of tyrosine to tRNA(Tyr) in a two-step reaction: tyrosine is first activated by ATP to form Tyr-AMP and then transferred to the acceptor end of tRNA(Tyr). This chain is Tyrosine--tRNA ligase, found in Borreliella burgdorferi (strain ATCC 35210 / DSM 4680 / CIP 102532 / B31) (Borrelia burgdorferi).